The sequence spans 1382 residues: Hepatocyte growth factor receptor (1382 aa).

An N-terminal signal peptide occupies residues 1–24 (MKAPAVLAPGILVLLFTLVQKSYG). Residues 25–933 (ECREALVKSE…VIVQPDQNFT (909 aa)) lie on the Extracellular side of the membrane. Residues 27–516 (REALVKSEMN…TGKKITKIPL (490 aa)) form the Sema domain. Asn-45 is a glycosylation site (N-linked (GlcNAc...) asparagine). 4 disulfide bridges follow: Cys-95/Cys-101, Cys-98/Cys-160, Cys-133/Cys-141, and Cys-173/Cys-176. Asn-106 carries an N-linked (GlcNAc...) asparagine glycan. Residues Asn-203 and Asn-359 are each glycosylated (N-linked (GlcNAc...) asparagine). Intrachain disulfides connect Cys-299–Cys-364 and Cys-386–Cys-398. N-linked (GlcNAc...) asparagine glycosylation is found at Asn-400 and Asn-406. 4 cysteine pairs are disulfide-bonded: Cys-521–Cys-539, Cys-527–Cys-562, Cys-530–Cys-546, and Cys-542–Cys-552. IPT/TIG domains are found at residues 564–656 (PTIY…FSYV), 658–740 (PVIT…FSYQ), and 743–837 (PIVY…LIYV). Residue Thr-583 is glycosylated (O-linked (Man) threonine). 2 N-linked (GlcNAc...) asparagine glycosylation sites follow: Asn-608 and Asn-636. 2 O-linked (Man) threonine glycosylation sites follow: Thr-677 and Thr-762. N-linked (GlcNAc...) asparagine glycosylation is found at Asn-786, Asn-880, and Asn-931. The helical transmembrane segment at 934–956 (GLIVGVISISIILLLLLGVFLWL) threads the bilayer. The Cytoplasmic segment spans residues 957–1382 (KKRKQIKDLG…QDNIDGEGDT (426 aa)). At Ser-967 the chain carries Phosphoserine. Residue Thr-978 is modified to Phosphothreonine. Phosphoserine occurs at positions 991, 998, and 1001. Residue Tyr-1004 is modified to Phosphotyrosine. Residues 1079-1346 (VHFNEVIGRG…RISAIFSTFI (268 aa)) enclose the Protein kinase domain. Residues 1085–1093 (IGRGHFGCV) and Lys-1111 contribute to the ATP site. Asp-1205 (proton acceptor) is an active-site residue. The tract at residues 1213–1382 (LDEKFTVKVA…QDNIDGEGDT (170 aa)) is interaction with RANBP9. At Tyr-1231 the chain carries Phosphotyrosine. Phosphotyrosine; by autocatalysis is present on residues Tyr-1235 and Tyr-1236. A Phosphothreonine modification is found at Thr-1290. Positions 1321 to 1360 (WHPKAELRPSFSELVSRISAIFSTFIGEHYVHVNATYVNV) are interaction with MUC20. A phosphotyrosine; by autocatalysis mark is found at Tyr-1350 and Tyr-1357. Residue Tyr-1366 is modified to Phosphotyrosine.

The protein belongs to the protein kinase superfamily. Tyr protein kinase family. As to quaternary structure, heterodimer made of an alpha chain (50 kDa) and a beta chain (145 kDa) which are disulfide linked. Binds PLXNB1. Interacts when phosphorylated with downstream effectors including STAT3, PIK3R1, SRC, PCLG1, GRB2 and GAB1. Interacts with SPSB1, SPSB2 and SPSB4. Interacts with INPP5D/SHIP1. When phosphorylated at Tyr-1357, interacts with INPPL1/SHIP2. Interacts with RANBP9 and RANBP10, as well as SPSB1, SPSB2, SPSB3 and SPSB4. SPSB1 binding occurs in the presence and in the absence of HGF, however HGF treatment has a positive effect on this interaction. Interacts with MUC20; prevents interaction with GRB2 and suppresses hepatocyte growth factor-induced cell proliferation. Interacts with GRB10. Interacts with PTPN1 and PTPN2. Interacts with HSP90AA1 and HSP90AB1; the interaction suppresses MET kinase activity. Interacts with tensin TNS3. Interacts (when phosphorylated) with tensin TNS4 (via SH2 domain); the interaction increases MET protein stability by inhibiting MET endocytosis and subsequent lysosomal degradation. Autophosphorylated in response to ligand binding on Tyr-1235 and Tyr-1236 in the kinase domain leading to further phosphorylation of Tyr-1350 and Tyr-1357 in the C-terminal multifunctional docking site. Dephosphorylated by PTPRJ at Tyr-1350 and Tyr-1366. Dephosphorylated by PTPN1 and PTPN2. In terms of processing, ubiquitinated. Ubiquitination by CBL regulates the receptor stability and activity through proteasomal degradation. Post-translationally, O-mannosylation of IPT/TIG domains by TMEM260 is required for protein maturation. O-mannosylated residues are composed of single mannose glycans that are not elongated or modified.

It is found in the membrane. The enzyme catalyses L-tyrosyl-[protein] + ATP = O-phospho-L-tyrosyl-[protein] + ADP + H(+). With respect to regulation, in its inactive state, the C-terminal tail interacts with the catalytic domain and inhibits the kinase activity. Upon ligand binding, the C-terminal tail is displaced and becomes phosphorylated, thus increasing the kinase activity. Receptor tyrosine kinase that transduces signals from the extracellular matrix into the cytoplasm by binding to hepatocyte growth factor/HGF ligand. Regulates many physiological processes including proliferation, scattering, morphogenesis and survival. Ligand binding at the cell surface induces autophosphorylation of MET on its intracellular domain that provides docking sites for downstream signaling molecules. Following activation by ligand, interacts with the PI3-kinase subunit PIK3R1, PLCG1, SRC, GRB2, STAT3 or the adapter GAB1. Recruitment of these downstream effectors by MET leads to the activation of several signaling cascades including the RAS-ERK, PI3 kinase-AKT, or PLCgamma-PKC. The RAS-ERK activation is associated with the morphogenetic effects while PI3K/AKT coordinates prosurvival effects. During embryonic development, MET signaling plays a role in gastrulation, development and migration of muscles and neuronal precursors, angiogenesis and kidney formation. In adults, participates in wound healing as well as organ regeneration and tissue remodeling. Also promotes differentiation and proliferation of hematopoietic cells. The polypeptide is Hepatocyte growth factor receptor (MET) (Felis catus (Cat)).